The sequence spans 296 residues: Gamma-D-glutamyl-L-lysine dipeptidyl-peptidase (296 aa).

Substrate contacts are provided by residues Tyr90, 199–201 (DCS), and 218–219 (DA). The 126-residue stretch at 170-295 (KGTAEDIIQT…ELCAVRRCFS (126 aa)) folds into the NlpC/P60 domain. Cys200 functions as the Nucleophile in the catalytic mechanism. The active-site Proton acceptor is the His253. Residue His265 is part of the active site.

This sequence belongs to the peptidase C40 family.

It carries out the reaction The enzyme releases L-Ala-gamma-D-Glu dipeptides from cell wall peptides via cleavage of an L-Ala-gamma-D-Glu-|-L-Lys bond.. The protein operates within cell wall degradation; peptidoglycan degradation. Specifically hydrolyzes gamma-D-glutamyl-L-lysine bonds in murein peptides, releasing L-Ala-D-Glu. This is Gamma-D-glutamyl-L-lysine dipeptidyl-peptidase (ykfC) from Bacillus subtilis (strain 168).